The primary structure comprises 495 residues: Glycerol kinase (495 aa).

Threonine 16 contributes to the ADP binding site. ATP is bound by residues threonine 16 and threonine 17. Threonine 16 contacts sn-glycerol 3-phosphate. Arginine 20 contributes to the ADP binding site. Sn-glycerol 3-phosphate-binding residues include arginine 86, glutamate 87, tyrosine 138, and aspartate 246. Glycerol is bound by residues arginine 86, glutamate 87, tyrosine 138, aspartate 246, and glutamine 247. ADP contacts are provided by threonine 268 and glycine 316. Positions 268, 316, 320, and 417 each coordinate ATP. ADP-binding residues include glycine 417 and asparagine 421.

The protein belongs to the FGGY kinase family.

The catalysed reaction is glycerol + ATP = sn-glycerol 3-phosphate + ADP + H(+). It participates in polyol metabolism; glycerol degradation via glycerol kinase pathway; sn-glycerol 3-phosphate from glycerol: step 1/1. With respect to regulation, inhibited by fructose 1,6-bisphosphate (FBP). Key enzyme in the regulation of glycerol uptake and metabolism. Catalyzes the phosphorylation of glycerol to yield sn-glycerol 3-phosphate. This is Glycerol kinase from Synechocystis sp. (strain ATCC 27184 / PCC 6803 / Kazusa).